The chain runs to 166 residues: Probable protein tyrosine phosphatase type IVA A (166 aa).

The region spanning 10–164 (NPASLVESST…YKSKKKSSCR (155 aa)) is the Tyrosine-protein phosphatase domain. An intrachain disulfide couples Cys52 to Cys107. Asp75 serves as the catalytic Proton donor. The Phosphocysteine intermediate role is filled by Cys107. 108-113 (VAGLGR) is a phosphate binding site. Substrate is bound at residue Arg113. Cys163 is subject to Cysteine methyl ester. Cys163 is lipidated: S-farnesyl cysteine. A propeptide spans 164-166 (RIM) (removed in mature form).

It belongs to the protein-tyrosine phosphatase family.

Its subcellular location is the membrane. The enzyme catalyses O-phospho-L-tyrosyl-[protein] + H2O = L-tyrosyl-[protein] + phosphate. The polypeptide is Probable protein tyrosine phosphatase type IVA A (Dictyostelium discoideum (Social amoeba)).